A 236-amino-acid chain; its full sequence is Regulatory protein cys-3 (236 aa).

The interval 26-89 (TLGQLQPIQP…MSVPPTPGAR (64 aa)) is disordered. Residues 28–37 (GQLQPIQPNP) are compositionally biased toward polar residues. Positions 99-162 (LAAEEDKRKR…KWLKGLVTEK (64 aa)) constitute a bZIP domain. The basic motif stretch occupies residues 105-137 (KRKRNTAASARFRIKKKQREQALEKSAKEMSEK). Residues 141-155 (LEGRIQALETENKWL) are leucine-zipper. The segment at 189-236 (AAAADKAEAAADKADAERAREESSFCVSTSSPSSDESVDTDNKKRRKD) is disordered. Over residues 193–211 (DKAEAAADKADAERAREES) the composition is skewed to basic and acidic residues. Low complexity predominate over residues 212 to 223 (SFCVSTSSPSSD).

The protein belongs to the bZIP family. GCN4 subfamily. As to quaternary structure, binds DNA as a dimer.

The protein resides in the nucleus. Turns on the expression of structural genes which encode sulfur-catabolic enzymes. Binds to sequence elements upstream of these genes. In Neurospora crassa (strain ATCC 24698 / 74-OR23-1A / CBS 708.71 / DSM 1257 / FGSC 987), this protein is Regulatory protein cys-3 (cys-3).